We begin with the raw amino-acid sequence, 1865 residues long: Dedicator of cytokinesis protein 1 (1865 aa).

The SH3 domain maps to 9 to 70 (REEKYGVAFY…PASYIHLKEA (62 aa)). The 185-residue stretch at 425 to 609 (RNDIYVTLVQ…DSFQISTLVC (185 aa)) folds into the C2 DOCK-type domain. The DOCKER domain occupies 1207–1617 (YKEIEREEMY…VEKEYGVRIM (411 aa)). Disordered stretches follow at residues 1619–1716 (SSLD…EFKP) and 1732–1865 (TISP…GIVQ). A compositionally biased stretch (low complexity) spans 1639–1666 (PSSSRPLSVASVSSLSSDSTPSRPGSDG). Over residues 1680–1694 (RSQDKLDKDDLEKEK) the composition is skewed to basic and acidic residues. Ser-1681 bears the Phosphoserine mark. The interval 1687 to 1695 (KDDLEKEKK) is phosphoinositide-binding. Residues 1695-1704 (KDKKKEKRNS) are compositionally biased toward basic residues. The segment covering 1705-1716 (KHQEIFEKEFKP) has biased composition (basic and acidic residues). Ser-1743, Ser-1751, Ser-1756, Ser-1761, and Ser-1764 each carry phosphoserine. Residues 1756-1766 (SVSPSSPSSQQ) show a composition bias toward low complexity. Residues Thr-1767 and Thr-1772 each carry the phosphothreonine modification. Residues 1793–1819 (ADVADVPPPLPLKGSVADYGNLMENQD) are interaction with NCK2 second and third SH3 domain (minor). Positions 1799-1805 (PPPLPLK) match the SH3-binding; interaction with CRK motif. Residues 1820 to 1836 (LLGSPTPPPPPPHQRHL) form an interaction with NCK2 third SH3 domain (major) region. The segment covering 1824–1851 (PTPPPPPPHQRHLPPPLPSKTPPPPPPK) has biased composition (pro residues). An interaction with NCK2 (minor) region spans residues 1837–1852 (PPPLPSKTPPPPPPKT). The SH3-binding; interaction with CRK signature appears at 1838-1843 (PPLPSK). Residues 1855–1865 (KQASVDSGIVQ) show a composition bias toward polar residues. Phosphoserine is present on Ser-1858.

It belongs to the DOCK family. In terms of assembly, interacts with the SH3 domains of CRK and NCK2 via multiple sites. Interacts with nucleotide-free RAC1 via its DOCKER domain. Interacts with ELMO1, ELMO2 and probably ELMO3 via its SH3 domain. Interacts with ADGRB1. Identified in a complex with AUTS2 and ELMO2. Highly expressed in placenta, lung, kidney, pancreas and ovary. Expressed at intermediate level in thymus, testes and colon.

The protein localises to the cytoplasm. It is found in the membrane. Involved in cytoskeletal rearrangements required for phagocytosis of apoptotic cells and cell motility. Along with DOCK1, mediates CRK/CRKL regulation of epithelial and endothelial cell spreading and migration on type IV collagen. Functions as a guanine nucleotide exchange factor (GEF), which activates Rac Rho small GTPases by exchanging bound GDP for free GTP. Its GEF activity may be enhanced by ELMO1. The polypeptide is Dedicator of cytokinesis protein 1 (DOCK1) (Homo sapiens (Human)).